The following is a 426-amino-acid chain: Glucose-6-phosphate isomerase (426 aa).

Glu-282 serves as the catalytic Proton donor. Residues His-303 and Lys-419 contribute to the active site.

Belongs to the GPI family.

It is found in the cytoplasm. The enzyme catalyses alpha-D-glucose 6-phosphate = beta-D-fructose 6-phosphate. It functions in the pathway carbohydrate biosynthesis; gluconeogenesis. It participates in carbohydrate degradation; glycolysis; D-glyceraldehyde 3-phosphate and glycerone phosphate from D-glucose: step 2/4. Its function is as follows. Catalyzes the reversible isomerization of glucose-6-phosphate to fructose-6-phosphate. The sequence is that of Glucose-6-phosphate isomerase from Mycoplasmoides gallisepticum (strain R(low / passage 15 / clone 2)) (Mycoplasma gallisepticum).